The primary structure comprises 478 residues: RNA-binding protein 42 (478 aa).

Positions 1–20 are enriched in low complexity; the sequence is MASAMAGAGPAPGLPVAGGP. Residues 1-33 form a disordered region; the sequence is MASAMAGAGPAPGLPVAGGPVVPGPGVGIPGKS. Ala2 bears the N-acetylalanine mark. Phosphoserine is present on Ser133. An asymmetric dimethylarginine mark is found at Arg151, Arg156, Arg166, and Arg179. Disordered stretches follow at residues 171 to 209 and 317 to 354; these read LSSA…PPMA and SLRP…PEKL. Residues 193 to 205 are compositionally biased toward pro residues; it reads PPLPGPPGPPMML. The segment at 234–478 is necessary for interaction with HNRNPK; the sequence is DLGLGLGLGL…QKEKKKLGLR (245 aa). The segment covering 343–354 has biased composition (basic and acidic residues); sequence GEDKKKGKPEKL. Residues 379-457 form the RRM domain; sequence FRIFCGDLGN…RPIKLRKSMW (79 aa).

This sequence belongs to the RRM RBM42 family. Interacts with HNRNPK.

The protein localises to the nucleus. Its subcellular location is the cytoplasm. In terms of biological role, binds (via the RRM domain) to the 3' untranslated region (UTR) of p21 mRNA. This is RNA-binding protein 42 (Rbm42) from Rattus norvegicus (Rat).